The following is a 247-amino-acid chain: MSSRYDRAVTIFSPDGRLLQVEYAQEAVRKGSTAVGVRGGNCVVLGVEKKSVAKLQEDRTVRKICVLDHVVMAFAGLTDARILINRAQVECQSHRLNVEDPVTLEYITRYIAQLKQKYTQSNGRRPFGISCLIGGFDADGSPYLFQTEPSGIFYEYKANATGCSAKTVREFFEKQYREEEVSTERGAVKLAIRALLEVAQSGQHNLEVAIMENGKPLKMLDRKVILEYLDIIEKEKEEELEKKKQKK.

This sequence belongs to the peptidase T1A family. In terms of assembly, the 26S proteasome consists of a 20S proteasome core and two 19S regulatory subunits. The 20S proteasome core is composed of 28 subunits that are arranged in four stacked rings, resulting in a barrel-shaped structure. The two end rings are each formed by seven alpha subunits, and the two central rings are each formed by seven beta subunits. The catalytic chamber with the active sites is on the inside of the barrel.

The protein resides in the cytoplasm. It localises to the nucleus. Its function is as follows. The proteasome is a multicatalytic proteinase complex which is characterized by its ability to cleave peptides with Arg, Phe, Tyr, Leu, and Glu adjacent to the leaving group at neutral or slightly basic pH. The proteasome has an ATP-dependent proteolytic activity. The protein is Proteasome subunit alpha type-7-1 (Pros28.1) of Drosophila virilis (Fruit fly).